Reading from the N-terminus, the 872-residue chain is DNA mismatch repair protein MutS (872 aa).

Residue 623–630 coordinates ATP; sequence GPNMAGKS.

The protein belongs to the DNA mismatch repair MutS family.

In terms of biological role, this protein is involved in the repair of mismatches in DNA. It is possible that it carries out the mismatch recognition step. This protein has a weak ATPase activity. This is DNA mismatch repair protein MutS from Trichlorobacter lovleyi (strain ATCC BAA-1151 / DSM 17278 / SZ) (Geobacter lovleyi).